Here is a 623-residue protein sequence, read N- to C-terminus: Phosphoenolpyruvate carboxykinase [GTP] (623 aa).

Substrate is bound by residues arginine 86 and 220 to 222 (YGG). Lysine 229 and histidine 248 together coordinate Mn(2+). Substrate is bound at residue serine 270. 271 to 276 (MCGKTS) is a GTP binding site. Cysteine 272 is a catalytic residue. Aspartate 289 contacts Mn(2+). Residue 384-386 (NAR) participates in substrate binding. GTP-binding residues include arginine 386 and arginine 418.

Belongs to the phosphoenolpyruvate carboxykinase [GTP] family. As to quaternary structure, homotetramer. The cofactor is Mn(2+).

It localises to the cytoplasm. The catalysed reaction is oxaloacetate + GTP = phosphoenolpyruvate + GDP + CO2. Its pathway is carbohydrate biosynthesis; gluconeogenesis. Functionally, involved in the gluconeogenesis. Catalyzes the conversion of oxaloacetate (OAA) to phosphoenolpyruvate (PEP), the rate-limiting step in the metabolic pathway that produces glucose from lactate and other precursors derived from the citric acid cycle. This chain is Phosphoenolpyruvate carboxykinase [GTP] (pckG), found in Thermococcus kodakarensis (strain ATCC BAA-918 / JCM 12380 / KOD1) (Pyrococcus kodakaraensis (strain KOD1)).